The following is a 252-amino-acid chain: Triosephosphate isomerase (252 aa).

Residue 10 to 12 coordinates substrate; it reads NWK. His96 serves as the catalytic Electrophile. Glu168 serves as the catalytic Proton acceptor. Substrate contacts are provided by residues Gly174, Ser214, and 235 to 236; that span reads GG.

The protein belongs to the triosephosphate isomerase family. Homodimer.

The protein resides in the cytoplasm. The enzyme catalyses D-glyceraldehyde 3-phosphate = dihydroxyacetone phosphate. The protein operates within carbohydrate biosynthesis; gluconeogenesis. Its pathway is carbohydrate degradation; glycolysis; D-glyceraldehyde 3-phosphate from glycerone phosphate: step 1/1. Functionally, involved in the gluconeogenesis. Catalyzes stereospecifically the conversion of dihydroxyacetone phosphate (DHAP) to D-glyceraldehyde-3-phosphate (G3P). The protein is Triosephosphate isomerase of Streptococcus pyogenes serotype M5 (strain Manfredo).